The sequence spans 538 residues: RNA-binding protein Ro60 (538 aa).

Methionine 1 carries the N-acetylmethionine modification. Residues serine 4 and serine 19 each carry the phosphoserine modification. Residues 16–369 enclose the TROVE domain; that stretch reads VVNSEGGCVW…TFKTVEPTGK (354 aa). Positions 120-284 are RNA-binding; the sequence is RIPTHLFTFI…EMPLTALLRN (165 aa). Lysine 224 carries the N6-acetyllysine modification. Residues 361–538 form a VWFA-like domain region; that stretch reads FKTVEPTGKR…VIRNFTLDVI (178 aa). A divalent metal cation is bound by residues serine 378, serine 380, and threonine 445.

The protein belongs to the Ro 60 kDa family. Identified in a IGF2BP1-dependent mRNP granule complex containing untranslated mRNAs. Found in a complex with PUF60 and Y5 RNA. Interacts with RAB11FIP5. In terms of tissue distribution, highest in brain, followed by lung, muscle, kidney and heart. Lower levels are found in testis, liver and spleen.

The protein resides in the cytoplasm. Its function is as follows. RNA-binding protein that binds to misfolded non-coding RNAs, pre-5S rRNA, and several small cytoplasmic RNA molecules known as Y RNAs. May play roles in cilia formation and/or maintenance. The polypeptide is RNA-binding protein Ro60 (Mus musculus (Mouse)).